Consider the following 257-residue polypeptide: Imidazole glycerol phosphate synthase subunit HisF (257 aa).

Active-site residues include Asp11 and Asp130.

The protein belongs to the HisA/HisF family. As to quaternary structure, heterodimer of HisH and HisF.

It is found in the cytoplasm. It carries out the reaction 5-[(5-phospho-1-deoxy-D-ribulos-1-ylimino)methylamino]-1-(5-phospho-beta-D-ribosyl)imidazole-4-carboxamide + L-glutamine = D-erythro-1-(imidazol-4-yl)glycerol 3-phosphate + 5-amino-1-(5-phospho-beta-D-ribosyl)imidazole-4-carboxamide + L-glutamate + H(+). It functions in the pathway amino-acid biosynthesis; L-histidine biosynthesis; L-histidine from 5-phospho-alpha-D-ribose 1-diphosphate: step 5/9. Functionally, IGPS catalyzes the conversion of PRFAR and glutamine to IGP, AICAR and glutamate. The HisF subunit catalyzes the cyclization activity that produces IGP and AICAR from PRFAR using the ammonia provided by the HisH subunit. The protein is Imidazole glycerol phosphate synthase subunit HisF of Shewanella baltica (strain OS223).